The primary structure comprises 151 residues: MNGMSGSSPAAPAPSPSSFFQHRHRHGGMMHMTFFWGKTTEVLFDGWPGTSLKMYWVCLAVIFVISAFSECLSRCGFMKSGPASLGGGLLQTAVYTVRAALSYLVMLAVMSFNGGVFVAAMAGFGLGFMIFGSRAFRATSSNSHTEVQSHC.

A run of 2 helical transmembrane segments spans residues 52 to 72 (LKMY…SECL) and 103 to 123 (YLVM…AMAG).

The protein belongs to the copper transporter (Ctr) (TC 1.A.56) family. SLC31A subfamily. In terms of tissue distribution, highly expressed in stems and at lower levels in leaves and flowers.

The protein localises to the membrane. Involved in the transport of copper. The chain is Copper transporter 3 (COPT3) from Arabidopsis thaliana (Mouse-ear cress).